The primary structure comprises 552 residues: Probable inorganic phosphate transporter 1-10 (552 aa).

The Cytoplasmic portion of the chain corresponds to 1–22 (MAPIGVLTALDQARTQYYHFKA). A helical membrane pass occupies residues 23–43 (IVIAGMGLFTDSYDLFCIAPV). Topologically, residues 44-68 (MKIVGRVYYSDGGARPGVTPPAVVS) are extracellular. Residues 69 to 89 (ATVGVALLGAVIGNVVFGALG) traverse the membrane as a helical segment. At 90-96 (DRVGRRR) the chain is on the cytoplasmic side. Residues 97–117 (VYGACLLLMVCSSVGSGFSVC) traverse the membrane as a helical segment. Over 118–123 (RTRRCA) the chain is Extracellular. Residues 124-144 (LASLCFFRFLLGVGVGGDYPL) form a helical membrane-spanning segment. Residues 145-158 (SATIMSEFANRRTR) lie on the Cytoplasmic side of the membrane. The helical transmembrane segment at 159–179 (GAFIAAVFSMQGFGILASSAV) threads the bilayer. Residues 180–203 (TMAVAAAFDHYTGYPAPLDTPECA) are Extracellular-facing. The helical transmembrane segment at 204-224 (DLAWRIILMAGAVPAALTYYW) threads the bilayer. Over 225–295 (RMSMPETARY…RRFVRQHGRD (71 aa)) the chain is Cytoplasmic. Residues 296-316 (LFACAAAWFLLDIPYYSSTLF) form a helical membrane-spanning segment. At 317–342 (QSQIYRPLFPAPGLINAFQEAFNVAK) the chain is on the extracellular side. The helical transmembrane segment at 343-363 (FQAVIAVASTIPGYFVAVLLI) threads the bilayer. Topologically, residues 364–369 (DRVGRR) are cytoplasmic. The chain crosses the membrane as a helical span at residues 370-390 (CLQMAGFLLMAVFLFALAGPY). Residues 391-397 (DGYWRDH) are Extracellular-facing. A helical transmembrane segment spans residues 398–418 (GAHAGYIVLYSLTFFSANLGP). Residues 419 to 439 (NTTTFILPAELFPARFRSTCH) are Cytoplasmic-facing. A helical membrane pass occupies residues 440–460 (GLSGAAGKLGALVGSIGFLWA). At 461-473 (SQQKDGAAAGHLP) the chain is on the extracellular side. A helical transmembrane segment spans residues 474–494 (GIGMMYALFVLGGICLLGLAL). At 495–552 (TYVFTPETMMRSLEENESDRAQTQVGDGGSDTEAAKSPASMASSHLSMSPILPARVSV) the chain is on the cytoplasmic side. Residues 507-540 (LEENESDRAQTQVGDGGSDTEAAKSPASMASSHL) form a disordered region.

Belongs to the major facilitator superfamily. Phosphate:H(+) symporter (TC 2.A.1.9) family. In terms of tissue distribution, expressed at low levels in roots.

The protein localises to the membrane. Functionally, high-affinity transporter for external inorganic phosphate. The chain is Probable inorganic phosphate transporter 1-10 (PHT1-10) from Oryza sativa subsp. japonica (Rice).